The following is a 251-amino-acid chain: Prolactin-7B1 (251 aa).

Positions 1–29 are cleaved as a signal peptide; the sequence is MHLSLTQQCLWPLQILLVSNLLLWENVAA. Asn73 carries an N-linked (GlcNAc...) asparagine glycan. Disulfide bonds link Cys100-Cys216 and Cys233-Cys241.

Belongs to the somatotropin/prolactin family.

The protein localises to the secreted. The sequence is that of Prolactin-7B1 (Prl7b1) from Rattus norvegicus (Rat).